We begin with the raw amino-acid sequence, 301 residues long: Protoheme IX farnesyltransferase (301 aa).

9 consecutive transmembrane segments (helical) span residues 16–36 (VVAL…PGIP), 41–61 (IQSG…AAAI), 93–113 (VFAG…VNLI), 114–134 (TAVL…VYLK), 141–161 (IVIG…AVTG), 172–192 (SLLV…LAIF), 217–237 (QILL…ATGM), 238–258 (SGVF…WYAW), and 273–293 (FGYS…DHWL).

Belongs to the UbiA prenyltransferase family. Protoheme IX farnesyltransferase subfamily.

It localises to the cell inner membrane. It catalyses the reaction heme b + (2E,6E)-farnesyl diphosphate + H2O = Fe(II)-heme o + diphosphate. It participates in porphyrin-containing compound metabolism; heme O biosynthesis; heme O from protoheme: step 1/1. Its function is as follows. Converts heme B (protoheme IX) to heme O by substitution of the vinyl group on carbon 2 of heme B porphyrin ring with a hydroxyethyl farnesyl side group. This chain is Protoheme IX farnesyltransferase, found in Xylella fastidiosa (strain 9a5c).